A 249-amino-acid chain; its full sequence is Spindlin-4 (249 aa).

3 tudor-like domain regions span residues 41–90 (VGCR…LELH), 119–168 (VGKA…YTLL), and 201–246 (VGKQ…YGLV). Histone H3K4me3 and H3R8me2a binding regions lie at residues 80–85 (GKDSVY), Glu-128, and 237–239 (DIH).

Belongs to the SPIN/STSY family. As to quaternary structure, interacts with C11orf84/SPINDOC. Associates with chromatin.

The protein resides in the cytoplasm. It localises to the nucleus. Functionally, binds to acetylated and methylated histones, including H3K4me3 and H4K20me3, probably acting as a histone reader that recognizes chromatin marks to mediate downstream cellular effects. Promotes canonical WNT signaling, and is involved in the down-regulation of cell proliferation. The protein is Spindlin-4 (Spin4) of Mus musculus (Mouse).